Reading from the N-terminus, the 310-residue chain is Methionyl-tRNA formyltransferase (310 aa).

109–112 lines the (6S)-5,6,7,8-tetrahydrofolate pocket; sequence SLLP.

The protein belongs to the Fmt family.

The enzyme catalyses L-methionyl-tRNA(fMet) + (6R)-10-formyltetrahydrofolate = N-formyl-L-methionyl-tRNA(fMet) + (6S)-5,6,7,8-tetrahydrofolate + H(+). Functionally, attaches a formyl group to the free amino group of methionyl-tRNA(fMet). The formyl group appears to play a dual role in the initiator identity of N-formylmethionyl-tRNA by promoting its recognition by IF2 and preventing the misappropriation of this tRNA by the elongation apparatus. This chain is Methionyl-tRNA formyltransferase, found in Chloroflexus aurantiacus (strain ATCC 29366 / DSM 635 / J-10-fl).